A 645-amino-acid polypeptide reads, in one-letter code: 1,4-alpha-glucan branching enzyme GlgB (645 aa).

Asp-309 (nucleophile) is an active-site residue. The Proton donor role is filled by Glu-352. The disordered stretch occupies residues 619-645; it reads VKTRKGSKKQDGSKTKVRSNVTSRGKR. Over residues 636–645 the composition is skewed to polar residues; the sequence is RSNVTSRGKR.

It belongs to the glycosyl hydrolase 13 family. GlgB subfamily. Monomer.

The enzyme catalyses Transfers a segment of a (1-&gt;4)-alpha-D-glucan chain to a primary hydroxy group in a similar glucan chain.. It participates in glycan biosynthesis; glycogen biosynthesis. In terms of biological role, catalyzes the formation of the alpha-1,6-glucosidic linkages in glycogen by scission of a 1,4-alpha-linked oligosaccharide from growing alpha-1,4-glucan chains and the subsequent attachment of the oligosaccharide to the alpha-1,6 position. The polypeptide is 1,4-alpha-glucan branching enzyme GlgB (Bacillus cereus (strain B4264)).